The chain runs to 97 residues: Putative defensin-like protein 240 (97 aa).

A signal peptide spans 1-23; sequence MRYTTSFIVFCFYIFLFTNLVQG. 4 disulfide bridges follow: Cys-29–Cys-88, Cys-39–Cys-69, Cys-47–Cys-85, and Cys-67–Cys-87.

It belongs to the DEFL family.

The protein localises to the secreted. This is Putative defensin-like protein 240 (SCRL18) from Arabidopsis thaliana (Mouse-ear cress).